A 97-amino-acid polypeptide reads, in one-letter code: YcgL domain-containing protein APP7_0754 (97 aa).

A YcgL domain is found at 6–90 (NLCAIYKSPK…PPENLLKTFL (85 aa)).

This chain is YcgL domain-containing protein APP7_0754, found in Actinobacillus pleuropneumoniae serotype 7 (strain AP76).